A 232-amino-acid polypeptide reads, in one-letter code: Aquaporin Z 2 (232 aa).

A run of 2 helical transmembrane segments spans residues 9 to 29 (FLGT…ASAF) and 32 to 52 (VGIG…TMAY). Positions 63 to 65 (NPA) match the NPA 1 motif. A run of 3 helical transmembrane segments spans residues 82–102 (VSYV…LYVI), 129–149 (LTAA…IILG), and 158–178 (GFAP…SIPV). The short motif at 184–186 (NPA) is the NPA 2 element. The helical transmembrane segment at 200–220 (LSQLWLFWIAPLFGAAIAGIV) threads the bilayer.

The protein belongs to the MIP/aquaporin (TC 1.A.8) family. As to quaternary structure, homotetramer.

The protein resides in the cell inner membrane. It carries out the reaction H2O(in) = H2O(out). In terms of biological role, channel that permits osmotically driven movement of water in both directions. It is involved in the osmoregulation and in the maintenance of cell turgor during volume expansion in rapidly growing cells. It mediates rapid entry or exit of water in response to abrupt changes in osmolarity. This chain is Aquaporin Z 2, found in Rhizobium meliloti (strain 1021) (Ensifer meliloti).